A 487-amino-acid chain; its full sequence is GTPase Der (487 aa).

2 EngA-type G domains span residues 3–166 and 193–366; these read PVIA…PRDA and IKIA…KSAV. Residues 9–16, 56–60, 118–121, 199–206, 246–250, and 311–314 each bind GTP; these read GRPNVGKS, DTGGI, NKID, DTAGV, and NKWD. Residues 367-451 enclose the KH-like domain; the sequence is TRWPTSRLTQ…PIRIEYKGGE (85 aa). The segment covering 449 to 461 has biased composition (basic and acidic residues); that stretch reads GGENPFEGKKNTL. The tract at residues 449–487 is disordered; it reads GGENPFEGKKNTLTDRQVNKKRRLMSHHKKAEKKRRDKR. Over residues 467–487 the composition is skewed to basic residues; that stretch reads NKKRRLMSHHKKAEKKRRDKR.

It belongs to the TRAFAC class TrmE-Era-EngA-EngB-Septin-like GTPase superfamily. EngA (Der) GTPase family. Associates with the 50S ribosomal subunit.

Its function is as follows. GTPase that plays an essential role in the late steps of ribosome biogenesis. The polypeptide is GTPase Der (Pseudomonas putida (strain GB-1)).